A 438-amino-acid chain; its full sequence is MESQQLHQNPHCPHGSAYASVTSKEVPSNQDPLAVSASNLPEFDRDSTKVNSQEETTPGTSAVPENHHHVSPQPASVPPPQNGQYQQHGMMTPNKAMASNWAHYQQPSMMTCSHYQTSPAYYQPDPHYPLPQYIPPLSTSSPDPIDSQDQHSEVPQAKTKVRNNVLPPHPHTSEENFSTWVKFYIRFLKNSNLGDIIPNDQGEIKRQMTYEEHAYIYNTFQAFAPFHLLPTWVKQILEINYSDILTVLCKSVSKMQTNNQELKDWIALANLEYNGSTSADTFEITVSTIIQRLKENNINVSDRLACQLILKGLSGDFKYLRNQYRTKTNMKLSQLFAEIQLIYDENKIMNLNKPSQYKQHSEYKNVSRTSPNTTNTKVTTRNYHRTNSSKPRAAKAHNIATSSKFSRVNNDHINESTVSSQYLSDDNELSLRPATERI.

Disordered regions lie at residues 1–88 (MESQ…YQQH), 365–397 (NVSR…AKAH), and 419–438 (SSQY…TERI). Polar residues-rich tracts occupy residues 19–39 (ASVT…SASN) and 49–60 (KVNSQEETTPGT). Positions 295 to 397 (ENNINVSDRL…SSKPRAAKAH (103 aa)) are RNA-binding. Residues 369–381 (TSPNTTNTKVTTR) are compositionally biased toward low complexity.

As to quaternary structure, homotrimer.

It is found in the cytoplasm. Capsid protein (CA) is the structural component of the virus-like particle (VLP), forming the shell that encapsulates the retrotransposons dimeric RNA genome. The particles are assembled from trimer-clustered units and there are holes in the capsid shells that allow for the diffusion of macromolecules. CA also has nucleocapsid-like chaperone activity, promoting primer tRNA(i)-Met annealing to the multipartite primer-binding site (PBS), dimerization of Ty2 RNA and initiation of reverse transcription. This chain is Transposon Ty2-OR2 Gag polyprotein (TY2A-OR2), found in Saccharomyces cerevisiae (strain ATCC 204508 / S288c) (Baker's yeast).